We begin with the raw amino-acid sequence, 287 residues long: Transmembrane protein 163 (287 aa).

The segment at M1–E63 is disordered. The Cytoplasmic portion of the chain corresponds to M1–A86. S11, S53, S55, and S59 each carry phosphoserine. Positions E40–S70 are required for interaction with MCOLN1. The chain crosses the membrane as a helical span at residues L87–V107. The Extracellular portion of the chain corresponds to S108–A114. Residues S115 to W135 form a helical membrane-spanning segment. Over R136 to R148 the chain is Cytoplasmic. A helical membrane pass occupies residues E149–V169. Residues K170–D185 are Extracellular-facing. Residues F186 to F206 form a helical membrane-spanning segment. The Cytoplasmic portion of the chain corresponds to M207 to R215. A helical transmembrane segment spans residues A216–L236. Residues S237–S253 are Extracellular-facing. The helical transmembrane segment at I254–V274 threads the bilayer. At P275 to E287 the chain is on the cytoplasmic side.

Belongs to the TMEM163 family. As to quaternary structure, homodimer. Interacts with MCOLN1/TRPML1. Interacts with SLC30A1, SLC30A2, SLC30A3 and SLC30A4.

It is found in the cytoplasmic vesicle. It localises to the secretory vesicle. Its subcellular location is the synaptic vesicle membrane. The protein localises to the early endosome membrane. The protein resides in the late endosome membrane. It is found in the lysosome membrane. It localises to the cell membrane. It carries out the reaction Zn(2+)(in) = Zn(2+)(out). Zinc ion transporter that mediates zinc efflux and plays a crucial role in intracellular zinc homeostasis. Binds the divalent cations Zn(2+), Ni(2+), and to a minor extent Cu(2+). Is a functional modulator of P2X purinoceptors, including P2RX1, P2RX3, P2RX4 and P2RX7. Plays a role in central nervous system development and is required for myelination, and survival and proliferation of oligodendrocytes. The sequence is that of Transmembrane protein 163 (TMEM163) from Bos taurus (Bovine).